The following is a 104-amino-acid chain: MTQVAKNDHRLMQVLLAPVVSEKATLVADKNEQVVFEVARDANKAEVKAAVELLFKVEVQSVQILNQKGKQKRFGRFMGRRNHVKKAYVSLKPGQEINFEAEAK.

It belongs to the universal ribosomal protein uL23 family. In terms of assembly, part of the 50S ribosomal subunit. Contacts protein L29, and trigger factor when it is bound to the ribosome.

Its function is as follows. One of the early assembly proteins it binds 23S rRNA. One of the proteins that surrounds the polypeptide exit tunnel on the outside of the ribosome. Forms the main docking site for trigger factor binding to the ribosome. This is Large ribosomal subunit protein uL23 from Cupriavidus metallidurans (strain ATCC 43123 / DSM 2839 / NBRC 102507 / CH34) (Ralstonia metallidurans).